Here is a 420-residue protein sequence, read N- to C-terminus: Tyrosine--tRNA ligase (420 aa).

Tyr-33 contributes to the L-tyrosine binding site. The short motif at 38–47 is the 'HIGH' region element; it reads PTADSLHVGH. 2 residues coordinate L-tyrosine: Tyr-167 and Gln-171. The 'KMSKS' region signature appears at 227–231; the sequence is KFGKT. Lys-230 serves as a coordination point for ATP. Residues 353–419 form the S4 RNA-binding domain; sequence LTVADLLVKV…GKRNYALVKV (67 aa).

Belongs to the class-I aminoacyl-tRNA synthetase family. TyrS type 1 subfamily. In terms of assembly, homodimer.

The protein resides in the cytoplasm. It catalyses the reaction tRNA(Tyr) + L-tyrosine + ATP = L-tyrosyl-tRNA(Tyr) + AMP + diphosphate + H(+). In terms of biological role, catalyzes the attachment of tyrosine to tRNA(Tyr) in a two-step reaction: tyrosine is first activated by ATP to form Tyr-AMP and then transferred to the acceptor end of tRNA(Tyr). This chain is Tyrosine--tRNA ligase, found in Anaeromyxobacter dehalogenans (strain 2CP-1 / ATCC BAA-258).